Consider the following 870-residue polypeptide: Disks large homolog 2 (870 aa).

2 S-palmitoyl cysteine lipidation sites follow: Cys5 and Cys7. The residue at position 28 (Ser28) is a Phosphoserine. Position 58 is a phosphotyrosine (Tyr58). Phosphoserine is present on Ser65. PDZ domains are found at residues Glu98–Arg184 and Glu193–Pro279. Phosphoserine is present on residues Ser307, Ser328, Ser360, Ser365, Ser406, and Ser414. The 81-residue stretch at Lys421–Gln501 folds into the PDZ 3 domain. Position 505 is a phosphotyrosine (Tyr505). Residues Ser528, Ser530, Ser553, Ser627, and Ser635 each carry the phosphoserine modification. In terms of domain architecture, SH3 spans Lys536 to Glu606. The Guanylate kinase-like domain maps to Thr680–Glu855. Residues Tyr750 and Tyr755 each carry the phosphotyrosine modification.

The protein belongs to the MAGUK family. As to quaternary structure, interacts through its PDZ domains with NETO1. Interacts with NOS1/nNOS through second PDZ domain. Interacts with KCNJ2/Kir2.1 (via C-terminus) through one of its PDZ domains. Interacts with KCNJ4, Interacts with FRMPD4 (via C-terminus). Interacts with LRFN1, LRFN2 and LRFN4. Interacts with FASLG. Interacts with KCNJ4. Interacts with ADAM22. Interacts with DGKI (via PDZ-binding motif). In terms of processing, palmitoylation of isoform 1 is not required for targeting to postsynaptic density.

The protein localises to the cell membrane. It localises to the postsynaptic density. Its subcellular location is the synapse. The protein resides in the membrane. It is found in the cell projection. The protein localises to the axon. It localises to the perikaryon. In terms of biological role, required for perception of chronic pain through NMDA receptor signaling. Regulates surface expression of NMDA receptors in dorsal horn neurons of the spinal cord. Interacts with the cytoplasmic tail of NMDA receptor subunits as well as inward rectifying potassium channels. Involved in regulation of synaptic stability at cholinergic synapses. Part of the postsynaptic protein scaffold of excitatory synapses. This Homo sapiens (Human) protein is Disks large homolog 2 (DLG2).